Consider the following 290-residue polypeptide: Ribosomal RNA small subunit methyltransferase A (290 aa).

Residues N27, L29, G54, E75, D100, and N125 each coordinate S-adenosyl-L-methionine.

It belongs to the class I-like SAM-binding methyltransferase superfamily. rRNA adenine N(6)-methyltransferase family. RsmA subfamily.

It localises to the cytoplasm. The catalysed reaction is adenosine(1518)/adenosine(1519) in 16S rRNA + 4 S-adenosyl-L-methionine = N(6)-dimethyladenosine(1518)/N(6)-dimethyladenosine(1519) in 16S rRNA + 4 S-adenosyl-L-homocysteine + 4 H(+). Its function is as follows. Specifically dimethylates two adjacent adenosines (A1518 and A1519) in the loop of a conserved hairpin near the 3'-end of 16S rRNA in the 30S particle. May play a critical role in biogenesis of 30S subunits. This is Ribosomal RNA small subunit methyltransferase A from Streptococcus pneumoniae (strain Hungary19A-6).